The sequence spans 130 residues: Small ribosomal subunit protein uS9 (130 aa).

The protein belongs to the universal ribosomal protein uS9 family.

The sequence is that of Small ribosomal subunit protein uS9 from Thiobacillus denitrificans (strain ATCC 25259 / T1).